The sequence spans 452 residues: 1,4-beta-D-glucan cellobiohydrolase A (452 aa).

A signal peptide spans 1-17; it reads MHQRALLFSALLTAVRA. Asn62 carries an N-linked (GlcNAc...) asparagine glycan. The active-site Nucleophile is the Glu227. The Proton donor role is filled by Glu232. N-linked (GlcNAc...) asparagine glycosylation is found at Asn285, Asn335, Asn402, and Asn445.

Belongs to the glycosyl hydrolase 7 (cellulase C) family.

It is found in the secreted. The catalysed reaction is Hydrolysis of (1-&gt;4)-beta-D-glucosidic linkages in cellulose and cellotetraose, releasing cellobiose from the non-reducing ends of the chains.. Functionally, the biological conversion of cellulose to glucose generally requires three types of hydrolytic enzymes: (1) Endoglucanases which cut internal beta-1,4-glucosidic bonds; (2) Exocellobiohydrolases that cut the disaccharide cellobiose from the non-reducing end of the cellulose polymer chain; (3) Beta-1,4-glucosidases which hydrolyze the cellobiose and other short cello-oligosaccharides to glucose. This is 1,4-beta-D-glucan cellobiohydrolase A (cbhA) from Aspergillus niger.